A 223-amino-acid chain; its full sequence is Transcription factor bHLH75 (223 aa).

The disordered stretch occupies residues 58-100 (FPNLLHGNTRRKGNKEESGSKRRRKRSEEEEAMNGDETQKPKD). A bHLH domain is found at 110-160 (QATDSHSLAERVRREKINERLKCLQDLVPGCYKAMGMAVMLDVIIDYVRSL).

As to quaternary structure, homodimer. Expressed in leaves, stems, and flowers.

It localises to the nucleus. The protein is Transcription factor bHLH75 (BHLH75) of Arabidopsis thaliana (Mouse-ear cress).